A 130-amino-acid chain; its full sequence is MAATVKKTGSKKSKRNVPNGVVHIQSTFNNTIVSISDTSGHVISWSSAGASGFKGARKGTPFAAQTAAEAAARRALDQGMRQIEVLVRGPGAGRETAIRALQVAGLEITLIRDVTPLPHNGCRRPKRRRV.

It belongs to the universal ribosomal protein uS11 family. In terms of assembly, part of the 30S ribosomal subunit. Interacts with proteins S7 and S18. Binds to IF-3.

In terms of biological role, located on the platform of the 30S subunit, it bridges several disparate RNA helices of the 16S rRNA. Forms part of the Shine-Dalgarno cleft in the 70S ribosome. The polypeptide is Small ribosomal subunit protein uS11 (Prochlorococcus marinus (strain MIT 9215)).